The chain runs to 499 residues: Serine/threonine-protein phosphatase 5 (499 aa).

Residues 1 to 23 (MAMAEGERTECAEPPRDEPPADG) are disordered. A2 is subject to N-acetylalanine. 3 TPR repeats span residues 28 to 61 (AEELKTQANDYFKAKDYENAIKFYSQAIELNPSN), 62 to 95 (AIYYGNRSLAYLRTECYGYALGDATRAIELDKKY), and 96 to 129 (IKGYYRRAASNMALGKFRAALRDYETVVKVKPHD). Positions 184–499 (GKVTISFMKE…ANTLLQLGMM (316 aa)) are catalytic. Mn(2+)-binding residues include D242, H244, and D271. H244 serves as a coordination point for substrate. Substrate contacts are provided by residues R275 and 303 to 304 (NH). Residue N303 participates in Mn(2+) binding. H304 (proton donor/acceptor) is an active-site residue. H352 lines the Mn(2+) pocket. Substrate contacts are provided by R400 and H427. Position 427 (H427) interacts with Mn(2+). The required for autoinhibition stretch occupies residues 495–499 (QLGMM).

This sequence belongs to the PPP phosphatase family. PP-5 (PP-T) subfamily. As to quaternary structure, probably forms a complex composed of chaperones HSP90 and HSP70, co-chaperones STIP1/HOP, CDC37, PPP5C, PTGES3/p23, TSC1 and client protein TSC2. Probably forms a complex composed of chaperones HSP90 and HSP70, co-chaperones CDC37, PPP5C, TSC1 and client protein TSC2, CDK4, AKT, RAF1 and NR3C1; this complex does not contain co-chaperones STIP1/HOP and PTGES3/p23. Part of a complex with HSP90/HSP90AA1 and steroid receptors. Interacts (via TPR repeats) with HSP90AA1 (via TPR repeat-binding motif) or HSPA1A/HSPA1B; the interaction is direct and activates the phosphatase activity. Dissociates from HSPA1A/HSPA1B and HSP90AA1 in response to arachidonic acid. Interacts with CPNE1 (via VWFA domain). Interacts with CDC16, CDC27. Interacts with KLHDC10 (via the 6 Kelch repeats); inhibits the phosphatase activity on MAP3K5. Interacts with ATM and ATR; both interactions are induced by DNA damage and enhance ATM and ATR kinase activity. Interacts with RAD17; reduced by DNA damage. Interacts with nuclear receptors such as NR3C1/GCR and PPARG (activated by agonist); regulates their transactivation activities. Interacts (via TPR repeats) with S100 proteins S100A1, S100A2, S100A6, S100B and S100P; the interactions are calcium-dependent, strongly activate PPP5C phosphatase activity and compete with HSP90AA1 and MAP3K5 interactions. Interacts with SMAD2 and SMAD3 but not with SMAD1; decreases SMAD3 phosphorylation and protein levels. Interacts (via TPR repeats) with CRY1 and CRY2; the interaction with CRY2 down-regulates the phosphatase activity on CSNK1E. Interacts (via TPR repeats) with the active form of RAC1, GNA12 or GNA13; these interactions activate the phosphatase activity and translocate PPP5C to the cell membrane. Interacts with FLCN. Mg(2+) is required as a cofactor. The cofactor is Mn(2+). Activated by at least two different proteolytic cleavages producing a 56 kDa and a 50 kDa form. In terms of tissue distribution, ubiquitous.

It localises to the nucleus. Its subcellular location is the cytoplasm. The protein localises to the cell membrane. It catalyses the reaction O-phospho-L-seryl-[protein] + H2O = L-seryl-[protein] + phosphate. The catalysed reaction is O-phospho-L-threonyl-[protein] + H2O = L-threonyl-[protein] + phosphate. With respect to regulation, autoinhibited. In the autoinhibited state, the TPR domain interacts with the catalytic region and prevents substrate access to the catalytic pocket. Allosterically activated by various polyunsaturated fatty acids, free long-chain fatty-acids and long-chain fatty acyl-CoA esters, arachidonic acid being the most effective activator. HSP90A and probably RAC1, GNA12 and GNA13 can also release the autoinhibition by the TPR repeat. Activation by RAC1, GNA12 and GNA13 is synergistic with the one produced by fatty acids binding. Inhibited by okadaic acid. In terms of biological role, serine/threonine-protein phosphatase that dephosphorylates a myriad of proteins involved in different signaling pathways including the kinases CSNK1E, ASK1/MAP3K5, PRKDC and RAF1, the nuclear receptors NR3C1, PPARG, ESR1 and ESR2, SMAD proteins and TAU/MAPT. Implicated in wide ranging cellular processes, including apoptosis, differentiation, DNA damage response, cell survival, regulation of ion channels or circadian rhythms, in response to steroid and thyroid hormones, calcium, fatty acids, TGF-beta as well as oxidative and genotoxic stresses. Participates in the control of DNA damage response mechanisms such as checkpoint activation and DNA damage repair through, for instance, the regulation ATM/ATR-signaling and dephosphorylation of PRKDC and TP53BP1. Inhibits ASK1/MAP3K5-mediated apoptosis induced by oxidative stress. Plays a positive role in adipogenesis, mainly through the dephosphorylation and activation of PPARG transactivation function. Also dephosphorylates and inhibits the anti-adipogenic effect of NR3C1. Regulates the circadian rhythms, through the dephosphorylation and activation of CSNK1E. May modulate TGF-beta signaling pathway by the regulation of SMAD3 phosphorylation and protein expression levels. Dephosphorylates and may play a role in the regulation of TAU/MAPT. Through their dephosphorylation, may play a role in the regulation of ions channels such as KCNH2. Dephosphorylate FNIP1, disrupting interaction with HSP90AA1/Hsp90. In Homo sapiens (Human), this protein is Serine/threonine-protein phosphatase 5 (PPP5C).